Consider the following 398-residue polypeptide: Dihydroorotase (398 aa).

Zn(2+) contacts are provided by His-58 and His-60. Substrate is bound by residues 60 to 62 and Asn-92; that span reads HFR. Residues Asp-151, His-178, and His-215 each coordinate Zn(2+). A substrate-binding site is contributed by Asn-256. Asp-283 provides a ligand contact to Zn(2+). Asp-283 is an active-site residue. Substrate is bound by residues His-287 and 297-298; that span reads PG.

Belongs to the metallo-dependent hydrolases superfamily. DHOase family. Class I DHOase subfamily. The cofactor is Zn(2+).

The catalysed reaction is (S)-dihydroorotate + H2O = N-carbamoyl-L-aspartate + H(+). It participates in pyrimidine metabolism; UMP biosynthesis via de novo pathway; (S)-dihydroorotate from bicarbonate: step 3/3. Catalyzes the reversible cyclization of carbamoyl aspartate to dihydroorotate. This Clostridium botulinum (strain Eklund 17B / Type B) protein is Dihydroorotase.